A 107-amino-acid chain; its full sequence is Small leucine-rich protein 1 (107 aa).

Transmembrane regions (helical) follow at residues 19 to 39 and 53 to 73; these read AALV…LAMS and FLFF…IAYF. The segment at 85 to 107 is disordered; the sequence is SQNCDRQHNPKDGSSLYQRMKWT.

It localises to the membrane. The sequence is that of Small leucine-rich protein 1 (SMLR1) from Homo sapiens (Human).